The following is a 224-amino-acid chain: Octanoyltransferase (224 aa).

Positions 29–224 (EATPDALWIC…GQKLATYLAP (196 aa)) constitute a BPL/LPL catalytic domain. Substrate is bound by residues 68–75 (RGGQVTFH), 157–159 (ALG), and 170–172 (GVA). Residue Cys-188 is the Acyl-thioester intermediate of the active site.

It belongs to the LipB family.

It localises to the cytoplasm. The enzyme catalyses octanoyl-[ACP] + L-lysyl-[protein] = N(6)-octanoyl-L-lysyl-[protein] + holo-[ACP] + H(+). It functions in the pathway protein modification; protein lipoylation via endogenous pathway; protein N(6)-(lipoyl)lysine from octanoyl-[acyl-carrier-protein]: step 1/2. Catalyzes the transfer of endogenously produced octanoic acid from octanoyl-acyl-carrier-protein onto the lipoyl domains of lipoate-dependent enzymes. Lipoyl-ACP can also act as a substrate although octanoyl-ACP is likely to be the physiological substrate. This Polaromonas naphthalenivorans (strain CJ2) protein is Octanoyltransferase.